The chain runs to 376 residues: Actin, macronuclear (376 aa).

The protein belongs to the actin family.

Its subcellular location is the cytoplasm. The protein resides in the cytoskeleton. It carries out the reaction ATP + H2O = ADP + phosphate + H(+). Its function is as follows. Actins are highly conserved proteins that are involved in various types of cell motility and are ubiquitously expressed in all eukaryotic cells. The polypeptide is Actin, macronuclear (Tetrahymena thermophila).